We begin with the raw amino-acid sequence, 136 residues long: Acyl-CoA thioesterase YbgC (136 aa).

Residue Asp-18 is part of the active site.

It belongs to the 4-hydroxybenzoyl-CoA thioesterase family.

Functionally, displays acyl-CoA thioesterase activity with short chain aliphatic acyl-CoA thioesters, such as propionyl-CoA and butyryl-CoA. Enzyme activity is relatively low, suggesting that the acyl-CoA thioesters used in the assays are not the physiological substrates. Has no detectable activity with 4-hydroxybenzoyl-CoA, lauroyl-CoA (C12:0), arachidoyl-CoA (C20:0) and arachidonoyl-CoA (C20:4). This is Acyl-CoA thioesterase YbgC (ybgC) from Haemophilus influenzae (strain ATCC 51907 / DSM 11121 / KW20 / Rd).